We begin with the raw amino-acid sequence, 234 residues long: BTB/POZ domain-containing protein KCTD5 (234 aa).

A2 is subject to N-acetylalanine. Positions 44–146 constitute a BTB domain; sequence KWVRLNVGGT…LVKDKIRERD (103 aa). The disordered stretch occupies residues 213–234; the sequence is PYGTTSEPSEKAKILQERGSRM. A compositionally biased stretch (basic and acidic residues) spans 220–234; sequence PSEKAKILQERGSRM.

Homopentamer. Interacts (via C-terminus) with GRASP55/GORASP2. Interacts with CUL3 and with ubiquitinated proteins. Interacts with CRY1.

The protein resides in the cytoplasm. Its subcellular location is the cytosol. It is found in the nucleus. Functionally, its interaction with CUL3 suggests that it may act as a substrate adapter in some E3 ligase complex. Does not affect the function of Kv channel Kv2.1/KCNB1, Kv1.2/KCNA2, Kv4.2/KCND2 and Kv3.4/KCNC4. This is BTB/POZ domain-containing protein KCTD5 (Kctd5) from Mus musculus (Mouse).